A 391-amino-acid chain; its full sequence is NADH-quinone oxidoreductase subunit D (391 aa).

This sequence belongs to the complex I 49 kDa subunit family. NDH-1 is composed of 14 different subunits. Subunits NuoB, C, D, E, F, and G constitute the peripheral sector of the complex.

Its subcellular location is the cell inner membrane. The catalysed reaction is a quinone + NADH + 5 H(+)(in) = a quinol + NAD(+) + 4 H(+)(out). Functionally, NDH-1 shuttles electrons from NADH, via FMN and iron-sulfur (Fe-S) centers, to quinones in the respiratory chain. The immediate electron acceptor for the enzyme in this species is believed to be ubiquinone. Couples the redox reaction to proton translocation (for every two electrons transferred, four hydrogen ions are translocated across the cytoplasmic membrane), and thus conserves the redox energy in a proton gradient. The protein is NADH-quinone oxidoreductase subunit D of Rickettsia akari (strain Hartford).